The following is a 139-amino-acid chain: MSTVSQLIKKRRSSKTSKTKAPALSYGFNVLQKKNKHYSSPQKMGVCLRVTTMTPKKPNSALRKFARVRLSNGSEVTAYIPGVGHSLQEHSSVLVRGGRVKDLPGVRYHIVRGALDATGVANRKQGRSKYGSKLPKEKK.

The tract at residues 1–21 (MSTVSQLIKKRRSSKTSKTKA) is disordered. Positions 8–18 (IKKRRSSKTSK) are enriched in basic residues. 3-methylthioaspartic acid is present on Asp-102.

It belongs to the universal ribosomal protein uS12 family. In terms of assembly, part of the 30S ribosomal subunit. Contacts proteins S8 and S17. May interact with IF1 in the 30S initiation complex.

With S4 and S5 plays an important role in translational accuracy. Its function is as follows. Interacts with and stabilizes bases of the 16S rRNA that are involved in tRNA selection in the A site and with the mRNA backbone. Located at the interface of the 30S and 50S subunits, it traverses the body of the 30S subunit contacting proteins on the other side and probably holding the rRNA structure together. The combined cluster of proteins S8, S12 and S17 appears to hold together the shoulder and platform of the 30S subunit. The protein is Small ribosomal subunit protein uS12 of Aster yellows witches'-broom phytoplasma (strain AYWB).